A 215-amino-acid polypeptide reads, in one-letter code: Nucleoside triphosphate pyrophosphatase (215 aa).

The active-site Proton acceptor is D80.

It belongs to the Maf family. The cofactor is a divalent metal cation.

Its subcellular location is the cytoplasm. The catalysed reaction is a ribonucleoside 5'-triphosphate + H2O = a ribonucleoside 5'-phosphate + diphosphate + H(+). It catalyses the reaction a 2'-deoxyribonucleoside 5'-triphosphate + H2O = a 2'-deoxyribonucleoside 5'-phosphate + diphosphate + H(+). In terms of biological role, nucleoside triphosphate pyrophosphatase. May have a dual role in cell division arrest and in preventing the incorporation of modified nucleotides into cellular nucleic acids. This chain is Nucleoside triphosphate pyrophosphatase, found in Leifsonia xyli subsp. xyli (strain CTCB07).